The chain runs to 504 residues: Sperm motility kinase 3A (504 aa).

The Protein kinase domain occupies 28–276 (YVMLETIGHG…VAEVMVHPWV (249 aa)). ATP contacts are provided by residues 34-42 (IGHGGCATV) and Lys-57. Asp-147 acts as the Proton acceptor in catalysis. One can recognise a UBA domain in the interval 294–334 (KPDPAIVKAMGHIGFQAQDIEDSLRQRKFNQTMASYCLLKK). 2 disordered regions span residues 389–421 (VCGKSTSKKRDRRVSWPSVLGRPRHTAPTMDHT) and 441–468 (NSSEESTQGHTRASAADKPVHSRGWPRG). Positions 441 to 451 (NSSEESTQGHT) are enriched in polar residues.

It belongs to the protein kinase superfamily. CAMK Ser/Thr protein kinase family. Smok subfamily. As to expression, testis-specific. Expressed in the testis from 22 days postpartum (22 dpp).

The catalysed reaction is L-seryl-[protein] + ATP = O-phospho-L-seryl-[protein] + ADP + H(+). The enzyme catalyses L-threonyl-[protein] + ATP = O-phospho-L-threonyl-[protein] + ADP + H(+). Functionally, may play a role in sperm motility, especially in the regulation of flagellar function. The chain is Sperm motility kinase 3A from Mus musculus (Mouse).